The primary structure comprises 458 residues: Exodeoxyribonuclease 7 large subunit (458 aa).

This sequence belongs to the XseA family. Heterooligomer composed of large and small subunits.

The protein localises to the cytoplasm. It carries out the reaction Exonucleolytic cleavage in either 5'- to 3'- or 3'- to 5'-direction to yield nucleoside 5'-phosphates.. Its function is as follows. Bidirectionally degrades single-stranded DNA into large acid-insoluble oligonucleotides, which are then degraded further into small acid-soluble oligonucleotides. The protein is Exodeoxyribonuclease 7 large subunit of Yersinia pseudotuberculosis serotype O:1b (strain IP 31758).